We begin with the raw amino-acid sequence, 362 residues long: Probable dual-specificity RNA methyltransferase RlmN (362 aa).

Glutamate 105 acts as the Proton acceptor in catalysis. A Radical SAM core domain is found at 111–344; the sequence is HNYGNSVCVT…VTIRREQGHD (234 aa). A disulfide bridge connects residues cysteine 118 and cysteine 349. Positions 125, 129, and 132 each coordinate [4Fe-4S] cluster. Residues 175–176, serine 207, 230–232, and asparagine 306 each bind S-adenosyl-L-methionine; these read GE and SLH. Catalysis depends on cysteine 349, which acts as the S-methylcysteine intermediate.

Belongs to the radical SAM superfamily. RlmN family. [4Fe-4S] cluster is required as a cofactor.

The protein localises to the cytoplasm. It catalyses the reaction adenosine(2503) in 23S rRNA + 2 reduced [2Fe-2S]-[ferredoxin] + 2 S-adenosyl-L-methionine = 2-methyladenosine(2503) in 23S rRNA + 5'-deoxyadenosine + L-methionine + 2 oxidized [2Fe-2S]-[ferredoxin] + S-adenosyl-L-homocysteine. The enzyme catalyses adenosine(37) in tRNA + 2 reduced [2Fe-2S]-[ferredoxin] + 2 S-adenosyl-L-methionine = 2-methyladenosine(37) in tRNA + 5'-deoxyadenosine + L-methionine + 2 oxidized [2Fe-2S]-[ferredoxin] + S-adenosyl-L-homocysteine. Functionally, specifically methylates position 2 of adenine 2503 in 23S rRNA and position 2 of adenine 37 in tRNAs. In Halalkalibacterium halodurans (strain ATCC BAA-125 / DSM 18197 / FERM 7344 / JCM 9153 / C-125) (Bacillus halodurans), this protein is Probable dual-specificity RNA methyltransferase RlmN.